A 338-amino-acid polypeptide reads, in one-letter code: Outer membrane transporter protein TsaT (338 aa).

The first 22 residues, 1-22 (MNFRRRLCTAALIAALPLASQA), serve as a signal peptide directing secretion.

As to quaternary structure, part of a two-component transport system composed of TsaT and TsaS.

Its subcellular location is the cell outer membrane. Its function is as follows. Involved in the uptake of p-toluenesulphonate (TSA). Forms a large, general diffusion pore with a preference for anions. In Comamonas testosteroni (Pseudomonas testosteroni), this protein is Outer membrane transporter protein TsaT (tsaT).